A 335-amino-acid polypeptide reads, in one-letter code: MSFAGLLDFARKDVDLPQNSPNELLKDLHANFINQYEKNKNSYHYIMAEHLRVSGIYWCVNAMDLSKQLERMSTEEIVNYVLGCRNTDGGYGPAPGHDSHLLHTLCAVQTLIIFNSIEKADADTISEYVKGLQQEDGSFCGDLSGEVDTRFTLCSLATCHLLGRLSTLNIDSAVRFLMRCYNTDGGFGTRPGSESHSGQIYCCVGALAIAGRLDEIDRDRTAEWLAFRQCDSGGLNGRPEKLPDVCYSWWVLASLAILGRLNFIDSDAMKKFIYACQDDETGGFADRPGDCADPFHTVFGIAALSLFGDDTLESVDPIFCMTKRCLGDKQVEMYY.

5 PFTB repeats span residues 74–115, 122–163, 170–211, 218–259, and 266–312; these read TEEI…IIFN, ADTI…HLLG, IDSA…AIAG, RDRT…AILG, and SDAM…DDTL. Residues 196-198 and 238-250 each bind geranylgeranyl diphosphate; these read HSG and RPEKLPDVCYSWW. The Zn(2+) site is built by Asp-244, Cys-246, and His-296.

It belongs to the protein prenyltransferase subunit beta family. In terms of assembly, heterodimer of an alpha and a beta subunit. Requires Zn(2+) as cofactor.

The enzyme catalyses geranylgeranyl diphosphate + L-cysteinyl-[protein] = S-geranylgeranyl-L-cysteinyl-[protein] + diphosphate. Catalyzes the transfer of a geranyl-geranyl moiety from geranyl-geranyl pyrophosphate to both cysteines in Rab proteins with an -XXCC, -XCXC and -CCXX C-terminal. The sequence is that of Probable geranylgeranyl transferase type-2 subunit beta (ggtb-1) from Caenorhabditis elegans.